The following is a 389-amino-acid chain: Ethanolamine-phosphate cytidylyltransferase (389 aa).

The disordered stretch occupies residues 1 to 20; the sequence is MIRNGRGAAGGAEQPGPGGR. CTP is bound by residues 221–222, 229–232, lysine 259, 307–310, and 336–340; these read AF, HVDF, HGKT, and SGSNL. Phosphoserine is present on serine 338. Residues threonine 341 and threonine 342 each carry the phosphothreonine modification.

The protein belongs to the cytidylyltransferase family. Strongest expression in liver, heart, and skeletal muscle.

It catalyses the reaction phosphoethanolamine + CTP + H(+) = CDP-ethanolamine + diphosphate. The protein operates within phospholipid metabolism; phosphatidylethanolamine biosynthesis; phosphatidylethanolamine from ethanolamine: step 2/3. Its function is as follows. Ethanolamine-phosphate cytidylyltransferase that catalyzes the second step in the synthesis of phosphatidylethanolamine (PE) from ethanolamine via the CDP-ethanolamine pathway. Phosphatidylethanolamine is a dominant inner-leaflet phospholipid in cell membranes, where it plays a role in membrane function by structurally stabilizing membrane-anchored proteins, and participates in important cellular processes such as cell division, cell fusion, blood coagulation, and apoptosis. The polypeptide is Ethanolamine-phosphate cytidylyltransferase (PCYT2) (Homo sapiens (Human)).